Here is a 1092-residue protein sequence, read N- to C-terminus: Electroneutral sodium bicarbonate exchanger 1 (1092 aa).

Disordered regions lie at residues 1–26, 55–95, and 243–263; these read MPAGSNEPDGVLSYQRPDEEAVVDQG, LGRQ…HDTP, and KKQSDPHSMDRDGQTVSPQSA. The Extracellular portion of the chain corresponds to 1–478; the sequence is MPAGSNEPDG…DYRDALSLQC (478 aa). A compositionally biased stretch (basic residues) spans 58–76; sequence QSHRHHRTHGQKHRRRGGR. Residues 243–255 show a composition bias toward basic and acidic residues; the sequence is KKQSDPHSMDRDG. The chain crosses the membrane as a helical span at residues 479–499; it reads LASFLFLYCACMSPVITFGGL. At 500–507 the chain is on the cytoplasmic side; it reads LGEATEGR. The helical transmembrane segment at 508-528 threads the bilayer; that stretch reads ISAIESLFGASMTGIAYSLFA. Topologically, residues 529 to 565 are extracellular; the sequence is GQPLTILGSTGPVLVFEKILFKFCKDYALSYLSLRAC. Residues 566–586 traverse the membrane as a helical segment; it reads IGLWTAFLCIVLVATDASSLV. Residues 587–595 are Cytoplasmic-facing; sequence CYITRFTEE. The chain crosses the membrane as a helical span at residues 596–616; it reads AFASLICIIFIYEAIEKLIHL. Residues 617 to 687 are Extracellular-facing; it reads AETYPIHMHS…EFIGSACGHH (71 aa). Intrachain disulfides connect cysteine 636/cysteine 684 and cysteine 638/cysteine 672. N-linked (GlcNAc) asparagine glycosylation is found at asparagine 646 and asparagine 666. The helical transmembrane segment at 688–708 threads the bilayer; sequence GPYTPDVLFWSCILFFATFIV. The Cytoplasmic portion of the chain corresponds to 709 to 731; that stretch reads SSTLKTFKTSRYFPTRVRSTVSD. Residues 732 to 752 traverse the membrane as a helical segment; that stretch reads FAVFLTIFTMVILDFLIGVPS. Residues 753 to 778 lie on the Extracellular side of the membrane; the sequence is PKLQVPSVFKPTRDDRGWFISPIGPN. A helical transmembrane segment spans residues 779-799; that stretch reads PWWTVIAAIIPALLCTILIFM. At 800–824 the chain is on the cytoplasmic side; sequence DQQITAVIINRKEHKLKKGCGYHLD. The chain crosses the membrane as a helical span at residues 825–845; it reads LLVVAIMLGVCSLMGLPWFVA. Over 846–881 the chain is Extracellular; sequence ATVLSITHVNSLKLESECSAPGEQPKFLGIREQRVT. Residues 882-902 form a helical membrane-spanning segment; the sequence is GLMIFVLMGCSVFMTAVLKFI. Topologically, residues 903–904 are cytoplasmic; the sequence is PM. A helical membrane pass occupies residues 905–925; the sequence is PVLYGVFLYMGVSSLQGIQFF. The Extracellular segment spans residues 926–962; the sequence is DRLKLFGMPAKHQPDFIYLRHVPLRKVHLFTLVQLTC. Residues 963–983 traverse the membrane as a helical segment; that stretch reads LVLLWVIKASPAAIVFPMMVL. Residues 984–1092 lie on the Cytoplasmic side of the membrane; sequence ALVFVRKVMD…GNTKEKSPFN (109 aa).

The protein belongs to the anion exchanger (TC 2.A.31) family. In terms of assembly, homodimer. In terms of tissue distribution, expressed in the Purkinje cells and dendrites in the molecular layer of the cerebellum (at protein level). Expressed in the hippocampal neurons (at protein level). Strong expression observed in testis and moderate expression in kidney inner medulla, the submandibular gland, eye, cerebrum and cerebellum.

The protein resides in the cell membrane. Its subcellular location is the apical cell membrane. It localises to the basolateral cell membrane. It is found in the cytoplasmic vesicle. The protein localises to the secretory vesicle. The protein resides in the synaptic vesicle membrane. The enzyme catalyses 2 hydrogencarbonate(out) + chloride(in) + Na(+)(out) = 2 hydrogencarbonate(in) + chloride(out) + Na(+)(in). Its function is as follows. Mediates electroneutral sodium- and carbonate-dependent chloride-HCO3(-) exchange with a Na(+):HCO3(-) stoichiometry of 2:1. Plays a major role in pH regulation in neurons. Mediates sodium reabsorption in the renal cortical collecting ducts. This is Electroneutral sodium bicarbonate exchanger 1 from Rattus norvegicus (Rat).